The chain runs to 98 residues: uncharacterized protein (98 aa).

Belongs to the CFAP97 family. As to expression, expressed in a number of tissues including brain, thymus, lung, heart, liver, spleen, kidney and testis.

This is an uncharacterized protein from Mus musculus (Mouse).